Consider the following 60-residue polypeptide: 5-hydroxytryptamine receptor 2B (60 aa).

Over 1 to 4 (VLCP) the chain is Extracellular. The helical transmembrane segment at 5-26 (AWLFLDVLFSTASIMHLCAISV) threads the bilayer. Ergotamine-binding residues include D10 and T15. The DRY motif; important for ligand-induced conformation changes motif lies at 27 to 29 (DRY). The Cytoplasmic portion of the chain corresponds to 27-46 (DRYIAIKKPIQANQYNSRAT). The helical transmembrane segment at 47 to 60 (AFIKITVVWLISIG) threads the bilayer.

It belongs to the G-protein coupled receptor 1 family. Interacts (via C-terminus) with MPDZ. As to expression, detected in aorta, renal artery, jugular vein, vena cava and femoral vein.

Its subcellular location is the cell membrane. It is found in the synapse. The protein localises to the synaptosome. G-protein coupled receptor for 5-hydroxytryptamine (serotonin). Also functions as a receptor for various ergot alkaloid derivatives and psychoactive substances. Ligand binding causes a conformation change that triggers signaling via guanine nucleotide-binding proteins (G proteins) and modulates the activity of downstream effectors. HTR2B is coupled to G(q)/G(11) G alpha proteins and activates phospholipase C-beta, releasing diacylglycerol (DAG) and inositol 1,4,5-trisphosphate (IP3) second messengers that modulate the activity of phosphatidylinositol 3-kinase and promote the release of Ca(2+) ions from intracellular stores, respectively. Beta-arrestin family members inhibit signaling via G proteins and mediate activation of alternative signaling pathways. Plays a role in the regulation of dopamine and 5-hydroxytryptamine release, 5-hydroxytryptamine uptake and in the regulation of extracellular dopamine and 5-hydroxytryptamine levels, and thereby affects neural activity. May play a role in the perception of pain. Plays a role in the regulation of behavior, including impulsive behavior. Required for normal proliferation of embryonic cardiac myocytes and normal heart development. Protects cardiomyocytes against apoptosis. Plays a role in the adaptation of pulmonary arteries to chronic hypoxia. Plays a role in vasoconstriction. Required for normal osteoblast function and proliferation, and for maintaining normal bone density. Required for normal proliferation of the interstitial cells of Cajal in the intestine. In Sus scrofa (Pig), this protein is 5-hydroxytryptamine receptor 2B (HTR2B).